Here is a 476-residue protein sequence, read N- to C-terminus: Protein transport protein Sec61 subunit alpha isoform 1 (476 aa).

Topologically, residues 2–28 are cytoplasmic; it reads AIKFLEVIKPFCVILPEIQKPERKIQF. A helical membrane pass occupies residues 29–46; the sequence is KEKVLWTAITLFIFLVCC. Residues 47-80 lie on the Lumenal side of the membrane; it reads QIPLFGIMSSDSADPFYWMRVILASNRGTLMELG. The chain crosses the membrane as a helical span at residues 81–97; that stretch reads ISPIVTSGLIMQLLAGA. At 98-109 the chain is on the cytoplasmic side; that stretch reads KIIEVGDTPKDR. Residues 110 to 131 form a helical membrane-spanning segment; that stretch reads ALFNGAQKLFGMIITIGQSIVY. The Lumenal portion of the chain corresponds to 132 to 148; the sequence is VMTGMYGDPSEMGAGIC. A helical membrane pass occupies residues 149–167; the sequence is LLITIQLFVAGLIVLLLDE. The Cytoplasmic segment spans residues 168 to 177; it reads LLQKGYGLGS. The helical transmembrane segment at 178–196 threads the bilayer; the sequence is GISLFIATNICETIVWKAF. Topologically, residues 197 to 241 are lumenal; the sequence is SPTTVNTGRGMEFEGAIIALFHLLATRTDKVRALREAFYRQNLPN. Residues 242–259 form a helical membrane-spanning segment; sequence LMNLIATIFVFAVVIYFQ. Residues 260 to 285 lie on the Cytoplasmic side of the membrane; the sequence is GFRVDLPIKSARYRGQYNTYPIKLFY. Residues 286–306 form a helical membrane-spanning segment; that stretch reads TSNIPIILQSALVSNLYVISQ. Over 307–356 the chain is Lumenal; it reads MLSARFSGNLLVSLLGTWSDTSSGGPARAYPVGGLCHYLSPPESFGSVLE. A helical transmembrane segment spans residues 357–379; sequence DPVHAVVYIVFMLGSCAFFSKTW. At 380 to 420 the chain is on the cytoplasmic side; it reads IEVSGSSAKDVAKQLKEQQMVMRGHRETSMVHELNRYIPTA. A helical membrane pass occupies residues 421–437; sequence AAFGGLCIGALSVLADF. The Lumenal portion of the chain corresponds to 438–443; the sequence is LGAIGS. A helical membrane pass occupies residues 444 to 458; it reads GTGILLAVTIIYQYF. Residues 459–476 lie on the Cytoplasmic side of the membrane; that stretch reads EIFVKEQSEVGSMGALLF.

It belongs to the SecY/SEC61-alpha family. In terms of assembly, the SEC61 channel-forming translocon complex consists of channel-forming core components SEC61A1, SEC61B and SEC61G and different auxiliary components such as SEC62 and SEC63. The SEC61 channel associates with the multi-pass translocon (MPT) complex.

Its subcellular location is the endoplasmic reticulum membrane. Component of SEC61 channel-forming translocon complex that mediates transport of signal peptide-containing precursor polypeptides across the endoplasmic reticulum (ER). Forms a ribosome receptor and a gated pore in the ER membrane, both functions required for cotranslational translocation of nascent polypeptides. May cooperate with auxiliary protein SEC62, SEC63 and HSPA5/BiP to enable post-translational transport of small presecretory proteins. The SEC61 channel is also involved in ER membrane insertion of transmembrane proteins: it mediates membrane insertion of the first few transmembrane segments of proteins, while insertion of subsequent transmembrane regions of multi-pass membrane proteins is mediated by the multi-pass translocon (MPT) complex. The SEC61 channel cooperates with the translocating protein TRAM1 to import nascent proteins into the ER. Controls the passive efflux of calcium ions from the ER lumen to the cytosol through SEC61 channel, contributing to the maintenance of cellular calcium homeostasis. Plays a critical role in nephrogenesis, specifically at pronephros stage. The protein is Protein transport protein Sec61 subunit alpha isoform 1 (SEC61A1) of Canis lupus familiaris (Dog).